We begin with the raw amino-acid sequence, 163 residues long: Nucleotide-binding protein YajQ (163 aa).

It belongs to the YajQ family.

Functionally, nucleotide-binding protein. This is Nucleotide-binding protein YajQ from Shigella dysenteriae serotype 1 (strain Sd197).